Reading from the N-terminus, the 387-residue chain is Phosphoglycerate kinase (387 aa).

Substrate contacts are provided by residues 21 to 23 (DLN), R36, 59 to 62 (HLGR), R113, and R146. Residues K197, E314, and 340–343 (GGDT) each bind ATP.

This sequence belongs to the phosphoglycerate kinase family. Monomer.

The protein localises to the cytoplasm. The enzyme catalyses (2R)-3-phosphoglycerate + ATP = (2R)-3-phospho-glyceroyl phosphate + ADP. Its pathway is carbohydrate degradation; glycolysis; pyruvate from D-glyceraldehyde 3-phosphate: step 2/5. This Pseudomonas fluorescens (strain ATCC BAA-477 / NRRL B-23932 / Pf-5) protein is Phosphoglycerate kinase.